A 117-amino-acid chain; its full sequence is Large ribosomal subunit protein uL18 (117 aa).

Belongs to the universal ribosomal protein uL18 family. As to quaternary structure, part of the 50S ribosomal subunit; part of the 5S rRNA/L5/L18/L25 subcomplex. Contacts the 5S and 23S rRNAs.

This is one of the proteins that bind and probably mediate the attachment of the 5S RNA into the large ribosomal subunit, where it forms part of the central protuberance. In Pectobacterium atrosepticum (strain SCRI 1043 / ATCC BAA-672) (Erwinia carotovora subsp. atroseptica), this protein is Large ribosomal subunit protein uL18.